Here is a 662-residue protein sequence, read N- to C-terminus: Translation factor guf1, mitochondrial (662 aa).

A mitochondrion-targeting transit peptide spans 1-42 (MRGCLQLARWLSAAPNWPASSLLKAPGSSFATRLFTTTSSYK). The tr-type G domain occupies 64–244 (ERYRNFCIVA…TVVEKIPAPI (181 aa)). Residues 73-80 (AHVDHGKS), 137-141 (DTPGH), and 191-194 (NKVD) contribute to the GTP site.

The protein belongs to the TRAFAC class translation factor GTPase superfamily. Classic translation factor GTPase family. LepA subfamily.

It is found in the mitochondrion inner membrane. It carries out the reaction GTP + H2O = GDP + phosphate + H(+). Functionally, promotes mitochondrial protein synthesis. May act as a fidelity factor of the translation reaction, by catalyzing a one-codon backward translocation of tRNAs on improperly translocated ribosomes. Binds to mitochondrial ribosomes in a GTP-dependent manner. This Emericella nidulans (strain FGSC A4 / ATCC 38163 / CBS 112.46 / NRRL 194 / M139) (Aspergillus nidulans) protein is Translation factor guf1, mitochondrial (guf1).